The sequence spans 299 residues: Protein translocase subunit SecF (299 aa).

The next 6 helical transmembrane spans lie at 14 to 34 (VLIV…FYHG), 142 to 162 (IFLV…RFKL), 166 to 186 (IASI…LGVF), 193 to 213 (YIIV…IIIF), 245 to 265 (LTSV…EGSI), and 270 to 290 (LVFM…ASPI).

It belongs to the SecD/SecF family. SecF subfamily. As to quaternary structure, forms a complex with SecD. Part of the essential Sec protein translocation apparatus which comprises SecA, SecYEG and auxiliary proteins SecDF. Other proteins may also be involved.

It is found in the cell inner membrane. Part of the Sec protein translocase complex. Interacts with the SecYEG preprotein conducting channel. SecDF uses the proton motive force (PMF) to complete protein translocation after the ATP-dependent function of SecA. The sequence is that of Protein translocase subunit SecF from Borreliella burgdorferi (strain ATCC 35210 / DSM 4680 / CIP 102532 / B31) (Borrelia burgdorferi).